A 190-amino-acid polypeptide reads, in one-letter code: Putative manganese efflux pump MntP (190 aa).

Transmembrane regions (helical) follow at residues 3–23 (PISL…AALG), 41–61 (LIFG…GQVA), 69–89 (DHWI…YNGI), 105–125 (FWIL…VGVG), 133–153 (IVVA…IGVM), and 168–188 (IIGG…HLSA).

This sequence belongs to the MntP (TC 9.B.29) family.

It is found in the cell inner membrane. Functionally, probably functions as a manganese efflux pump. This is Putative manganese efflux pump MntP from Pseudomonas syringae pv. syringae (strain B728a).